The chain runs to 1476 residues: Cystic fibrosis transmembrane conductance regulator (1476 aa).

The Cytoplasmic portion of the chain corresponds to 1–77 (MQKSPLEKAS…QLIHALRRCF (77 aa)). Residues 78–98 (FWRFLFYGILLYLGEVTKAVQ) form a helical membrane-spanning segment. One can recognise an ABC transmembrane type-1 1 domain in the interval 81–365 (FLFYGILLYL…TAVQIWYDSF (285 aa)). Residues 99–122 (PVLLGRIIASYDPENKVERSIAIY) are Extracellular-facing. The helical transmembrane segment at 123–146 (LGIGLCLLFIVRTLLLHPAIFGLH) threads the bilayer. Residues 147–195 (RIGMQMRTAMFSLIYKKTLKLSSRVLDKISIGQLVSLLSNNLNKFDEGL) lie on the Cytoplasmic side of the membrane. Residues 196-216 (ALAHFIWIAPLQVTLLMGLLW) traverse the membrane as a helical segment. The Extracellular portion of the chain corresponds to 217-222 (DLLQFS). A helical transmembrane segment spans residues 223–243 (AFCGLGLLIILVIFQAILGKM). Residues 244–298 (MVKYRDQRAAKINERLVITSEIIDNIYSVKAYCWESAMEKMIENLREVELKMTRK) lie on the Cytoplasmic side of the membrane. The helical transmembrane segment at 299–319 (AAYMRFFTSSAFFFSGFFVVF) threads the bilayer. At 320–339 (LSVLPYTVINGIVLRKIFTT) the chain is on the extracellular side. The helical transmembrane segment at 340–358 (ISFCIVLRMSVTRQFPTAV) threads the bilayer. The Cytoplasmic segment spans residues 359-853 (QIWYDSFGMI…YLRYFTLHKG (495 aa)). ATP-binding positions include tryptophan 401, 458–465 (GSTGSGKT), and glutamine 493. An ABC transporter 1 domain is found at 423–646 (SDENNVSFSH…RPDFSSKLMG (224 aa)). Cysteine 524 carries S-palmitoyl cysteine lipidation. 2 positions are modified to phosphoserine: serine 549 and serine 660. A disordered R region region spans residues 654 to 826 (TEERRSSILT…EEINEEDLKE (173 aa)). The residue at position 670 (serine 670) is a Phosphoserine; by PKA. 3 positions are modified to phosphoserine: serine 684, serine 698, and serine 710. Threonine 715 is subject to Phosphothreonine. Serine 732, serine 763, serine 785, serine 790, and serine 808 each carry phosphoserine. A helical transmembrane segment spans residues 854 to 874 (LLLVLIWCVLVFLVEVAASLF). In terms of domain architecture, ABC transmembrane type-1 2 spans 854 to 1153 (LLLVLIWCVL…SSIDTDSLMR (300 aa)). Residues 875–913 (VLWLLKNNPVNSGNNGTKISNSSYVVIITSTSFYYIFYI) are Extracellular-facing. N-linked (GlcNAc...) asparagine glycans are attached at residues asparagine 889 and asparagine 895. A discontinuously helical transmembrane segment spans residues 914–934 (YVGVADTLLALSLFRGLPLVH). At 935–985 (TLITASKILHRKMLHSILHAPMSTISKLKAGGILNRFSKDIAILDDFLPLT) the chain is on the cytoplasmic side. The helical transmembrane segment at 986-1006 (IFDFIQLVFIVIGAIIVVSAL) threads the bilayer. The Extracellular segment spans residues 1007–1008 (QP). The helical transmembrane segment at 1009–1029 (YIFLATVPGLVVFILLRAYFL) threads the bilayer. Over 1030–1090 (HTAQQLKQLE…TANWFMYLAT (61 aa)) the chain is Cytoplasmic. The chain crosses the membrane as a helical span at residues 1091 to 1111 (LRWFQMRIDMIFVLFFIVVTF). Over 1112–1125 (ISILTTGEGEGTAG) the chain is Extracellular. A helical transmembrane segment spans residues 1126–1146 (IILTLAMNIMSTLQWAVNSSI). At 1147–1476 (DTDSLMRSVS…TEEEVQETRL (330 aa)) the chain is on the cytoplasmic side. The 232-residue stretch at 1208–1439 (VKDLTVKYMD…KSIFQQAISS (232 aa)) folds into the ABC transporter 2 domain. ATP-binding positions include tyrosine 1215 and 1240 to 1247 (GRTGSGKS). The interaction with GORASP2 stretch occupies residues 1382–1476 (RVLKQAFAGC…TEEEVQETRL (95 aa)). Cysteine 1391 carries the S-palmitoyl cysteine lipid modification. Phosphoserine occurs at positions 1440 and 1452. The segment at 1446-1476 (FQGRHSSKHKPRTQITALKEETEEEVQETRL) is disordered. Over residues 1466–1476 (ETEEEVQETRL) the composition is skewed to acidic residues. The PDZ-binding signature appears at 1474 to 1476 (TRL).

This sequence belongs to the ABC transporter superfamily. ABCC family. CFTR transporter (TC 3.A.1.202) subfamily. As to quaternary structure, monomer; does not require oligomerization for channel activity. May form oligomers in the membrane. Interacts with SLC26A3, SLC26A6 and NHERF1. Interacts with SHANK2. Interacts with MYO6. Interacts (via C-terminus) with GOPC (via PDZ domain); this promotes CFTR internalization and thereby decreases channel activity. Interacts with SLC4A7 through NHERF1. Found in a complex with MYO5B and RAB11A. Interacts with ANO1. Interacts with SLC26A8. Interacts with AHCYL1; the interaction increases CFTR activity. Interacts with CSE1L. The core-glycosylated form interacts with GORASP2 (via PDZ GRASP-type 1 domain) in respone to ER stress. Interacts with MARCHF2; the interaction leads to CFTR ubiqtuitination and degradation. Interacts with ADGRG2. Post-translationally, N-glycosylated. In terms of processing, phosphorylated; cAMP treatment promotes phosphorylation and activates the channel. Dephosphorylation decreases the ATPase activity (in vitro). Phosphorylation at PKA sites activates the channel. Phosphorylation at PKC sites enhances the response to phosphorylation by PKA. Phosphorylated by AMPK; this inhibits channel activity. Ubiquitinated, leading to its degradation in the lysosome. Deubiquitination by USP10 in early endosomes enhances its endocytic recycling to the cell membrane. Ubiquitinated by RNF185 during ER stress. Ubiquitinated by MARCHF2. In terms of tissue distribution, expressed in the epididymis (at protein level). In the initial segment of the epididymis, detected on both the luminal and basolateral sides of the ducts where it is expressed in the duct columnar cells as well as in the interstitial smooth muscle cells. Expressed in sperm in the caput. In the cauda, detected along the luminal border but not continuously and is also expressed on the basolateral surface. Within the caudal lumen, detected on sperm. Isoform 1: Expressed in a variety of epithelial tissues including colon, kidney, lung, small intestine, pancreatic duct and testis. Isoform 2: Expressed only in testis. Isoform 3: Expressed only in testis.

It localises to the apical cell membrane. It is found in the early endosome membrane. The protein localises to the cell membrane. The protein resides in the recycling endosome membrane. Its subcellular location is the endoplasmic reticulum membrane. It localises to the nucleus. It carries out the reaction ATP + H2O + closed Cl(-) channel = ADP + phosphate + open Cl(-) channel.. The catalysed reaction is chloride(in) = chloride(out). The enzyme catalyses hydrogencarbonate(in) = hydrogencarbonate(out). It catalyses the reaction ATP + H2O = ADP + phosphate + H(+). In terms of biological role, epithelial ion channel that plays an important role in the regulation of epithelial ion and water transport and fluid homeostasis. Mediates the transport of chloride ions across the cell membrane. Possesses an intrinsic ATPase activity and utilizes ATP to gate its channel; the passive flow of anions through the channel is gated by cycles of ATP binding and hydrolysis by the ATP-binding domains. The ion channel is also permeable to HCO(3)(-); selectivity depends on the extracellular chloride concentration. Exerts its function also by modulating the activity of other ion channels and transporters. Contributes to the regulation of the pH and the ion content of the epithelial fluid layer. Modulates the activity of the epithelial sodium channel (ENaC) complex, in part by regulating the cell surface expression of the ENaC complex. May regulate bicarbonate secretion and salvage in epithelial cells by regulating the transporter SLC4A7. Can inhibit the chloride channel activity of ANO1. Plays a role in the chloride and bicarbonate homeostasis during sperm epididymal maturation and capacitation. This is Cystic fibrosis transmembrane conductance regulator from Mus musculus (Mouse).